The primary structure comprises 198 residues: Na(+)-translocating NADH-quinone reductase subunit E (198 aa).

6 helical membrane passes run 11–31 (SIFI…FLAV), 40–60 (GLGI…NLVF), 77–97 (FLGF…LEMF), 110–130 (GIFL…SFMV), 140–160 (VVYG…MAAI), and 176–196 (LGIT…FSGI).

This sequence belongs to the NqrDE/RnfAE family. Composed of six subunits; NqrA, NqrB, NqrC, NqrD, NqrE and NqrF.

The protein localises to the cell inner membrane. It carries out the reaction a ubiquinone + n Na(+)(in) + NADH + H(+) = a ubiquinol + n Na(+)(out) + NAD(+). In terms of biological role, NQR complex catalyzes the reduction of ubiquinone-1 to ubiquinol by two successive reactions, coupled with the transport of Na(+) ions from the cytoplasm to the periplasm. NqrA to NqrE are probably involved in the second step, the conversion of ubisemiquinone to ubiquinol. The protein is Na(+)-translocating NADH-quinone reductase subunit E of Tolumonas auensis (strain DSM 9187 / NBRC 110442 / TA 4).